Here is a 99-residue protein sequence, read N- to C-terminus: U1-theraphotoxin-Lsp1b (99 aa).

An N-terminal signal peptide occupies residues 1-23 (MRSLTLAALLLCSLLLVFHTSAA). The propeptide occupies 24-50 (EELQAQEGHLMIPGDTDTALETVDDER). Intrachain disulfides connect cysteine 54/cysteine 67, cysteine 58/cysteine 91, cysteine 72/cysteine 74, and cysteine 85/cysteine 96.

Belongs to the neurotoxin 12 (Hwtx-2) family. 04 (lasiotoxin) subfamily. In terms of tissue distribution, expressed by the venom gland.

The protein resides in the secreted. Toxin that causes irreversible contractile paralysis into adult Aedes aegypti resulting in 100% mortality after 24 hours. In Lasiodora sp. (strain IBSP 8539) (Brazilian salmon pink birdeater), this protein is U1-theraphotoxin-Lsp1b.